Consider the following 326-residue polypeptide: Probable oxidoreductase patJ (326 aa).

Residues 287-326 form a disordered region; it reads HGVQPGSVNGSNGHSTGVESKLEQLGSRAQRRVVIDDAGK. The span at 292-304 shows a compositional bias: polar residues; it reads GSVNGSNGHSTGV.

Belongs to the oxidoreductase OpS7 family.

Its subcellular location is the vacuole lumen. The protein localises to the cytoplasmic vesicle lumen. It participates in mycotoxin biosynthesis; patulin biosynthesis. Probable oxidoreductase; part of the gene cluster that mediates the biosynthesis of patulin, an acetate-derived tetraketide mycotoxin produced by several fungal species that shows antimicrobial properties against several bacteria. PatJ acts with patO in the vacuole to convert gentisyl alcohol to isoepoxydon. The pathway begins with the synthesis of 6-methylsalicylic acid by the polyketide synthase (PKS) patK via condensation of acetate and malonate units. The 6-methylsalicylic acid decarboxylase patG then catalyzes the decarboxylation of 6-methylsalicylic acid to yield m-cresol (also known as 3-methylphenol). These first reactions occur in the cytosol. The intermediate m-cresol is then transported into the endoplasmic reticulum where the cytochrome P450 monooxygenase patH converts it to m-hydroxybenzyl alcohol, which is further converted to gentisyl alcohol by the cytochrome P450 monooxygenase patI. The oxidoreductases patJ and patO further convert gentisyl alcohol to isoepoxydon in the vacuole. PatN catalyzes then the transformation of isoepoxydon into phyllostine. The cluster protein patF is responsible for the conversion from phyllostine to neopatulin whereas the alcohol dehydrogenase patD converts neopatulin to E-ascladiol. The steps between isoepoxydon and E-ascladiol occur in the cytosol, and E-ascladiol is probably secreted to the extracellular space by one of the cluster-specific transporters patC or patM. Finally, the secreted patulin synthase patE catalyzes the conversion of E-ascladiol to patulin. The chain is Probable oxidoreductase patJ from Penicillium expansum (Blue mold rot fungus).